A 539-amino-acid polypeptide reads, in one-letter code: Chaperonin GroEL (539 aa).

ATP is bound by residues 29–32 (TLGP), 86–90 (DGTTT), G413, 479–481 (DAL), and D495.

This sequence belongs to the chaperonin (HSP60) family. As to quaternary structure, forms a cylinder of 14 subunits composed of two heptameric rings stacked back-to-back. Interacts with the co-chaperonin GroES.

Its subcellular location is the cytoplasm. The catalysed reaction is ATP + H2O + a folded polypeptide = ADP + phosphate + an unfolded polypeptide.. Its function is as follows. Together with its co-chaperonin GroES, plays an essential role in assisting protein folding. The GroEL-GroES system forms a nano-cage that allows encapsulation of the non-native substrate proteins and provides a physical environment optimized to promote and accelerate protein folding. The chain is Chaperonin GroEL from Thermosipho africanus (strain TCF52B).